The primary structure comprises 177 residues: Large ribosomal subunit protein uL6 (177 aa).

Belongs to the universal ribosomal protein uL6 family. As to quaternary structure, part of the 50S ribosomal subunit.

Functionally, this protein binds to the 23S rRNA, and is important in its secondary structure. It is located near the subunit interface in the base of the L7/L12 stalk, and near the tRNA binding site of the peptidyltransferase center. In Cupriavidus pinatubonensis (strain JMP 134 / LMG 1197) (Cupriavidus necator (strain JMP 134)), this protein is Large ribosomal subunit protein uL6.